A 2556-amino-acid polypeptide reads, in one-letter code: Non-reducing polyketide synthase tazA (2556 aa).

Positions 16–270 are N-terminal acylcarrier protein transacylase domain (SAT); it reads LFGPQALSFT…QAIGLRGRFH (255 aa). Residue C143 is the Nucleophile; for transacylase activity of the active site. Catalysis depends on H270, which acts as the Proton donor/acceptor; for transacylase activity. The Ketosynthase family 3 (KS3) domain maps to 397-769; that stretch reads EDEIAVIGMA…GSNASMIVTQ (373 aa). The malonyl-CoA:ACP transacylase (MAT) domain stretch occupies residues 876–1209; that stretch reads CFGGQISRFV…WAHHCTQAPA (334 aa). The interval 1254 to 1383 is N-terminal hotdog fold; sequence YTFVGYQDEG…GQIIFQSAAE (130 aa). Residues 1254–1560 enclose the PKS/mFAS DH domain; that stretch reads YTFVGYQDEG…YSRLPKSTMS (307 aa). The tract at residues 1257–1564 is product template (PT) domain; it reads VGYQDEGKRQ…PKSTMSKMLT (308 aa). H1285 (proton acceptor; for dehydratase activity) is an active-site residue. Residues 1408–1560 are C-terminal hotdog fold; that stretch reads DPDDVLQGRN…YSRLPKSTMS (153 aa). D1465 serves as the catalytic Proton donor; for dehydratase activity. The disordered stretch occupies residues 1567-1621; it reads TAPSERRAQVDSPSMPASINAPPSASEQAPVEPAPQTKESAPIAEPGAGGQSNSK. Over residues 1577–1593 the composition is skewed to polar residues; the sequence is DSPSMPASINAPPSASE. The region spanning 1620–1694 is the Carrier domain; sequence SKVPGIVVEV…DVVQCVHKTL (75 aa). S1654 carries the post-translational modification O-(pantetheine 4'-phosphoryl)serine. The segment at 1700 to 1731 is disordered; sequence SAAQESEGNLTPASSGTQSPRSDPVSDTSLSD. The segment covering 1702–1731 has biased composition (polar residues); it reads AQESEGNLTPASSGTQSPRSDPVSDTSLSD. The tract at residues 1830–2107 is methyltransferase domain; sequence LEHEGRLIDI…DWTDGHLAEN (278 aa). The segment at 2180 to 2424 is NADPH-binding (R) domain; that stretch reads VTGATGSLGA…WTPVDVVAST (245 aa).

Pantetheine 4'-phosphate is required as a cofactor.

It functions in the pathway secondary metabolite biosynthesis. Non-reducing polyketide synthase; part of the gene cluster that mediates the biosynthesis of azaterrilone A and other azaphilones, a class of fungal metabolites characterized by a highly oxygenated pyrano-quinone bicyclic core and exhibiting a broad range of bioactivities. The first step of the pathway begins with tazA that assembles one acetyl-CoA starter unit, five malonyl-CoA units, and catalyzes a series of Claisen condensations, methylation, PT-mediated cyclization, and finally releases the first hexaketide precursor through the R-domain. The tazA product then undergoes reduction on its terminal ketone and the following pyran-ring formation by yet undetermined enzyme(s). Dehydration and enoyl reduction, possibly involving the trans-enoyl reductase tazE leads to the next intermediate. TazD is predicted as an acetyltransferase and might catalyze the acetylation steps leading to the synthesis of azaterrilone A. Azaterrilone A is not the final product of the taz pathway and both the highly reducing polyketide synthase tazB and the dual enzyme tazHJ catalyze late steps of the pathway, leading to the production of the 2 final stereoisomers that contain additional polyketide modification whose structures have still to be determined. The sequence is that of Non-reducing polyketide synthase tazA from Aspergillus terreus (strain NIH 2624 / FGSC A1156).